The chain runs to 209 residues: MSSGANATTIDVPETRAEAKGKAPLIAAPIVATTKATPHPNAGWKKGLAIFDFLLRLAAIAATLAAATTMGTTDETLPFFTQFFQFQASFDDLPAFMFFVVATAIASGYLALSLPFSLVSIFRPHAQGIRLLLIISDTVMLALTTAGAASATAIVYLAHNGDSSANWIAICQQFTDFCQSVSGAVVASFIAVVIFMLLVMMSALALRKH.

The Cytoplasmic portion of the chain corresponds to 1–46 (MSSGANATTIDVPETRAEAKGKAPLIAAPIVATTKATPHPNAGWKK). The chain crosses the membrane as a helical span at residues 47 to 67 (GLAIFDFLLRLAAIAATLAAA). At 68–95 (TTMGTTDETLPFFTQFFQFQASFDDLPA) the chain is on the extracellular side. The chain crosses the membrane as a helical span at residues 96-116 (FMFFVVATAIASGYLALSLPF). At 117 to 137 (SLVSIFRPHAQGIRLLLIISD) the chain is on the cytoplasmic side. The chain crosses the membrane as a helical span at residues 138–158 (TVMLALTTAGAASATAIVYLA). The Extracellular segment spans residues 159 to 183 (HNGDSSANWIAICQQFTDFCQSVSG). The helical transmembrane segment at 184–204 (AVVASFIAVVIFMLLVMMSAL) threads the bilayer. Over 205 to 209 (ALRKH) the chain is Cytoplasmic.

The protein belongs to the Casparian strip membrane proteins (CASP) family. Homodimer and heterodimers.

The protein localises to the cell membrane. In terms of biological role, regulates membrane-cell wall junctions and localized cell wall deposition. Required for establishment of the Casparian strip membrane domain (CSD) and the subsequent formation of Casparian strips, a cell wall modification of the root endodermis that determines an apoplastic barrier between the intraorganismal apoplasm and the extraorganismal apoplasm and prevents lateral diffusion. This Vitis vinifera (Grape) protein is Casparian strip membrane protein 1.